Reading from the N-terminus, the 95-residue chain is MASETVSNHQEKALALLQADAEKILRLIKVQMDNLTMPQCPLYEEVLDTQMFGLSREVDFAVRLGLIGEEQGKAMLGELERELSALHEAFTNKQQ.

Belongs to the UPF0358 family.

This chain is UPF0358 protein BcerKBAB4_3775, found in Bacillus mycoides (strain KBAB4) (Bacillus weihenstephanensis).